The chain runs to 454 residues: tRNA modification GTPase MnmE (454 aa).

The (6S)-5-formyl-5,6,7,8-tetrahydrofolate site is built by R23, E80, and K120. The TrmE-type G domain occupies 216–377; sequence GMKVVIAGRP…LRNHLKQSMG (162 aa). N226 is a binding site for K(+). Residues 226–231, 245–251, 270–273, 335–338, and 358–360 each bind GTP; these read NAGKSS, TDIAGTT, DTAG, NKAD, and SAR. S230 serves as a coordination point for Mg(2+). Residues T245, I247, and T250 each coordinate K(+). T251 contacts Mg(2+). (6S)-5-formyl-5,6,7,8-tetrahydrofolate is bound at residue K454.

This sequence belongs to the TRAFAC class TrmE-Era-EngA-EngB-Septin-like GTPase superfamily. TrmE GTPase family. In terms of assembly, homodimer. Heterotetramer of two MnmE and two MnmG subunits. The cofactor is K(+).

Its subcellular location is the cytoplasm. Its function is as follows. Exhibits a very high intrinsic GTPase hydrolysis rate. Involved in the addition of a carboxymethylaminomethyl (cmnm) group at the wobble position (U34) of certain tRNAs, forming tRNA-cmnm(5)s(2)U34. In Escherichia coli O7:K1 (strain IAI39 / ExPEC), this protein is tRNA modification GTPase MnmE.